Here is an 892-residue protein sequence, read N- to C-terminus: Translation initiation factor IF-2 (892 aa).

The segment at 66-305 (TRSTLNIPGT…SLQQGFQKPA (240 aa)) is disordered. The segment covering 68-82 (STLNIPGTGGKSKSV) has biased composition (polar residues). Composition is skewed to basic and acidic residues over residues 93-159 (VKRD…KDKV) and 166-216 (DMTK…EENK). Basic residues predominate over residues 254–269 (GRGRNAKAARPAKKGK). Over residues 270 to 282 (HAESKADREEARA) the composition is skewed to basic and acidic residues. The tr-type G domain maps to 391–560 (PRAPVVTIMG…LLQAEVLELK (170 aa)). The interval 400–407 (GHVDHGKT) is G1. 400–407 (GHVDHGKT) provides a ligand contact to GTP. The G2 stretch occupies residues 425–429 (GITQH). Residues 446–449 (DTPG) form a G3 region. GTP-binding positions include 446 to 450 (DTPGH) and 500 to 503 (NKID). The G4 stretch occupies residues 500–503 (NKID). The segment at 536–538 (SAK) is G5.

It belongs to the TRAFAC class translation factor GTPase superfamily. Classic translation factor GTPase family. IF-2 subfamily.

It is found in the cytoplasm. In terms of biological role, one of the essential components for the initiation of protein synthesis. Protects formylmethionyl-tRNA from spontaneous hydrolysis and promotes its binding to the 30S ribosomal subunits. Also involved in the hydrolysis of GTP during the formation of the 70S ribosomal complex. This Salmonella typhi protein is Translation initiation factor IF-2.